The chain runs to 200 residues: 3-isopropylmalate dehydratase small subunit (200 aa).

It belongs to the LeuD family. LeuD type 1 subfamily. In terms of assembly, heterodimer of LeuC and LeuD.

The enzyme catalyses (2R,3S)-3-isopropylmalate = (2S)-2-isopropylmalate. The protein operates within amino-acid biosynthesis; L-leucine biosynthesis; L-leucine from 3-methyl-2-oxobutanoate: step 2/4. In terms of biological role, catalyzes the isomerization between 2-isopropylmalate and 3-isopropylmalate, via the formation of 2-isopropylmaleate. The protein is 3-isopropylmalate dehydratase small subunit of Vibrio parahaemolyticus serotype O3:K6 (strain RIMD 2210633).